Reading from the N-terminus, the 520-residue chain is Ribonuclease Y (520 aa).

A helical membrane pass occupies residues 5 to 25; it reads ITIISSLLFLIVGLVVGSLIF. The segment at 70–127 is disordered; that stretch reads RTEIENELRGRRTETQKAENRLLQREENLDRKDTSLSKREATLERKEESISKRQQQIE. A KH domain is found at 210–273; it reads TVSVVTLPND…EIARIALEKL (64 aa). Positions 336-429 constitute an HD domain; that stretch reads VLNHSLEVSK…VAAADALSAA (94 aa).

Belongs to the RNase Y family.

It localises to the cell membrane. In terms of biological role, endoribonuclease that initiates mRNA decay. The protein is Ribonuclease Y of Listeria welshimeri serovar 6b (strain ATCC 35897 / DSM 20650 / CCUG 15529 / CIP 8149 / NCTC 11857 / SLCC 5334 / V8).